Consider the following 466-residue polypeptide: Methylenetetrahydrofolate--tRNA-(uracil-5-)-methyltransferase TrmFO (466 aa).

Gly14–Gly19 serves as a coordination point for FAD.

This sequence belongs to the MnmG family. TrmFO subfamily. FAD is required as a cofactor.

The protein localises to the cytoplasm. It carries out the reaction uridine(54) in tRNA + (6R)-5,10-methylene-5,6,7,8-tetrahydrofolate + NADH + H(+) = 5-methyluridine(54) in tRNA + (6S)-5,6,7,8-tetrahydrofolate + NAD(+). It catalyses the reaction uridine(54) in tRNA + (6R)-5,10-methylene-5,6,7,8-tetrahydrofolate + NADPH + H(+) = 5-methyluridine(54) in tRNA + (6S)-5,6,7,8-tetrahydrofolate + NADP(+). Catalyzes the folate-dependent formation of 5-methyl-uridine at position 54 (M-5-U54) in all tRNAs. The polypeptide is Methylenetetrahydrofolate--tRNA-(uracil-5-)-methyltransferase TrmFO (Brucella abortus (strain 2308)).